Reading from the N-terminus, the 126-residue chain is Non-specific lipid-transfer protein 13 (126 aa).

Residues 1 to 20 (MDTHTTKLVAISLLLLLVIS) form the signal peptide. Intrachain disulfides connect C36-C85, C46-C61, C62-C109, and C83-C123.

Belongs to the plant LTP family.

In terms of biological role, plant non-specific lipid-transfer proteins transfer phospholipids as well as galactolipids across membranes. May play a role in wax or cutin deposition in the cell walls of expanding epidermal cells and certain secretory tissues. This Arabidopsis thaliana (Mouse-ear cress) protein is Non-specific lipid-transfer protein 13 (LTP13).